Consider the following 364-residue polypeptide: Anhydro-N-acetylmuramic acid kinase (364 aa).

11 to 18 (GSSLDGID) contributes to the ATP binding site.

It belongs to the anhydro-N-acetylmuramic acid kinase family.

It catalyses the reaction 1,6-anhydro-N-acetyl-beta-muramate + ATP + H2O = N-acetyl-D-muramate 6-phosphate + ADP + H(+). Its pathway is amino-sugar metabolism; 1,6-anhydro-N-acetylmuramate degradation. It participates in cell wall biogenesis; peptidoglycan recycling. Catalyzes the specific phosphorylation of 1,6-anhydro-N-acetylmuramic acid (anhMurNAc) with the simultaneous cleavage of the 1,6-anhydro ring, generating MurNAc-6-P. Is required for the utilization of anhMurNAc either imported from the medium or derived from its own cell wall murein, and thus plays a role in cell wall recycling. In Pseudomonas syringae pv. tomato (strain ATCC BAA-871 / DC3000), this protein is Anhydro-N-acetylmuramic acid kinase.